The following is a 508-amino-acid chain: Steroid 17-alpha-hydroxylase/17,20 lyase (508 aa).

C442 lines the heme pocket.

The protein belongs to the cytochrome P450 family. Heme is required as a cofactor.

It is found in the endoplasmic reticulum membrane. The protein localises to the microsome membrane. It catalyses the reaction a C21-steroid + reduced [NADPH--hemoprotein reductase] + O2 = a 17alpha-hydroxy-C21-steroid + oxidized [NADPH--hemoprotein reductase] + H2O + H(+). The catalysed reaction is progesterone + reduced [NADPH--hemoprotein reductase] + O2 = 17alpha-hydroxyprogesterone + oxidized [NADPH--hemoprotein reductase] + H2O + H(+). It carries out the reaction pregnenolone + reduced [NADPH--hemoprotein reductase] + O2 = 17alpha-hydroxypregnenolone + oxidized [NADPH--hemoprotein reductase] + H2O + H(+). The enzyme catalyses 17alpha-hydroxyprogesterone + reduced [NADPH--hemoprotein reductase] + O2 = androst-4-ene-3,17-dione + acetate + oxidized [NADPH--hemoprotein reductase] + H2O + 2 H(+). It catalyses the reaction 17alpha-hydroxyprogesterone + reduced [NADPH--hemoprotein reductase] + O2 = 16alpha,17alpha-dihydroxyprogesterone + oxidized [NADPH--hemoprotein reductase] + H2O + H(+). The catalysed reaction is 16alpha,17alpha-dihydroxyprogesterone + reduced [NADPH--hemoprotein reductase] + O2 = 6beta,16alpha,17alpha-trihydroxyprogesterone + oxidized [NADPH--hemoprotein reductase] + H2O + H(+). It carries out the reaction 17alpha-hydroxypregnenolone + reduced [NADPH--hemoprotein reductase] + O2 = 3beta-hydroxyandrost-5-en-17-one + acetate + oxidized [NADPH--hemoprotein reductase] + H2O + 2 H(+). The enzyme catalyses 16alpha,17alpha-dihydroxypregnenolone + reduced [NADPH--hemoprotein reductase] + O2 = 3beta,16alpha-dihydroxy-androst-5-en-17-one + acetate + oxidized [NADPH--hemoprotein reductase] + H2O + 2 H(+). It catalyses the reaction 3beta-hydroxyandrost-5-en-17-one + reduced [NADPH--hemoprotein reductase] + O2 = 3beta,16alpha-dihydroxy-androst-5-en-17-one + oxidized [NADPH--hemoprotein reductase] + H2O + H(+). The catalysed reaction is androst-4-ene-3,17-dione + reduced [NADPH--hemoprotein reductase] + O2 = 16alpha-hydroxyandrost-4-ene-3,17-dione + oxidized [NADPH--hemoprotein reductase] + H2O + H(+). Its pathway is steroid hormone biosynthesis. It functions in the pathway steroid biosynthesis; glucocorticoid biosynthesis. With respect to regulation, regulated predominantly by intracellular cAMP levels. The 17,20-lyase activity is stimulated by cytochrome b5, which acts as an allosteric effector increasing the Vmax of the lyase activity. Its function is as follows. A cytochrome P450 monooxygenase involved in corticoid and androgen biosynthesis. Catalyzes 17-alpha hydroxylation of C21 steroids, which is common for both pathways. A second oxidative step, required only for androgen synthesis, involves an acyl-carbon cleavage. The 17-alpha hydroxy intermediates, as part of adrenal glucocorticoids biosynthesis pathway, are precursors of cortisol. Hydroxylates steroid hormones, pregnenolone and progesterone to form 17-alpha hydroxy metabolites, followed by the cleavage of the C17-C20 bond to form C19 steroids, dehydroepiandrosterone (DHEA) and androstenedione. Has 16-alpha hydroxylase activity. Catalyzes 16-alpha hydroxylation of 17-alpha hydroxy pregnenolone, followed by the cleavage of the C17-C20 bond to form 16-alpha-hydroxy DHEA. Also 16-alpha hydroxylates androgens, relevant for estriol synthesis. Mechanistically, uses molecular oxygen inserting one oxygen atom into a substrate, and reducing the second into a water molecule, with two electrons provided by NADPH via cytochrome P450 reductase (CPR; NADPH-ferrihemoprotein reductase). The chain is Steroid 17-alpha-hydroxylase/17,20 lyase (CYP17A1) from Cavia porcellus (Guinea pig).